The primary structure comprises 1232 residues: DNA-directed RNA polymerase subunit beta (1232 aa).

The disordered stretch occupies residues 1170–1232 (SVDEDADELE…LDLDDFGDEH (63 aa)). The segment covering 1171 to 1180 (VDEDADELEV) has biased composition (acidic residues). Positions 1189–1198 (PEEKEEKEKE) are enriched in basic and acidic residues. A compositionally biased stretch (acidic residues) spans 1199 to 1232 (DSDEYDDLREEDVEPDLEELSLDDLDLDDFGDEH).

This sequence belongs to the RNA polymerase beta chain family. The RNAP catalytic core consists of 2 alpha, 1 beta, 1 beta' and 1 omega subunit. When a sigma factor is associated with the core the holoenzyme is formed, which can initiate transcription.

The catalysed reaction is RNA(n) + a ribonucleoside 5'-triphosphate = RNA(n+1) + diphosphate. DNA-dependent RNA polymerase catalyzes the transcription of DNA into RNA using the four ribonucleoside triphosphates as substrates. In Clostridium botulinum (strain Kyoto / Type A2), this protein is DNA-directed RNA polymerase subunit beta.